Here is a 57-residue protein sequence, read N- to C-terminus: RPDFCELPAETGLCKAYIRSFHYNLAAQQCLQFIYGGCGGNANRFKTIDECRRTCVG.

A BPTI/Kunitz inhibitor domain is found at 5–55; the sequence is CELPAETGLCKAYIRSFHYNLAAQQCLQFIYGGCGGNANRFKTIDECRRTC. 3 disulfide bridges follow: Cys-5-Cys-55, Cys-14-Cys-38, and Cys-30-Cys-51.

It belongs to the venom Kunitz-type family. Expressed by the venom gland.

The protein localises to the secreted. In terms of biological role, serine protease inhibitor. This chain is Kunitz-type serine protease inhibitor 2, found in Hemachatus haemachatus (Rinkhals).